The chain runs to 61 residues: Small ribosomal subunit protein bS21 (61 aa).

A disordered region spans residues 40–61 (KPSVKRKKKSEAARKRKNKRRF). Basic residues predominate over residues 43–61 (VKRKKKSEAARKRKNKRRF).

The protein belongs to the bacterial ribosomal protein bS21 family.

The chain is Small ribosomal subunit protein bS21 from Ligilactobacillus salivarius (strain UCC118) (Lactobacillus salivarius).